A 159-amino-acid polypeptide reads, in one-letter code: Superoxide dismutase [Cu-Zn] (159 aa).

3 residues coordinate Cu cation: His47, His49, and His64. Cys58 and Cys150 are oxidised to a cystine. Positions 64, 72, 81, and 84 each coordinate Zn(2+). His121 serves as a coordination point for Cu cation.

The protein belongs to the Cu-Zn superoxide dismutase family. Cu cation is required as a cofactor. Requires Zn(2+) as cofactor.

The protein resides in the cytoplasm. The enzyme catalyses 2 superoxide + 2 H(+) = H2O2 + O2. Destroys radicals which are normally produced within the cells and which are toxic to biological systems. The chain is Superoxide dismutase [Cu-Zn] (SOD) from Haemonchus contortus (Barber pole worm).